An 85-amino-acid polypeptide reads, in one-letter code: UPF0473 protein CLK_1946 (85 aa).

This sequence belongs to the UPF0473 family.

In Clostridium botulinum (strain Loch Maree / Type A3), this protein is UPF0473 protein CLK_1946.